A 273-amino-acid chain; its full sequence is Ethanolamine ammonia-lyase small subunit (273 aa).

Residues valine 164, glutamate 185, and cysteine 214 each coordinate adenosylcob(III)alamin.

Belongs to the EutC family. In terms of assembly, the basic unit is a heterodimer which dimerizes to form tetramers. The heterotetramers trimerize; 6 large subunits form a core ring with 6 small subunits projecting outwards. The cofactor is adenosylcob(III)alamin.

It is found in the bacterial microcompartment. It carries out the reaction ethanolamine = acetaldehyde + NH4(+). The protein operates within amine and polyamine degradation; ethanolamine degradation. Catalyzes the deamination of various vicinal amino-alcohols to oxo compounds. Allows this organism to utilize ethanolamine as the sole source of nitrogen and carbon in the presence of external vitamin B12. This Pseudomonas aeruginosa (strain LESB58) protein is Ethanolamine ammonia-lyase small subunit.